The primary structure comprises 481 residues: Beta-amyrin 28-monooxygenase (481 aa).

Residues 4-24 form a helical membrane-spanning segment; it reads FYVPLLSLFVLFISLSFHFLF. A heme-binding site is contributed by Cys-428.

The protein belongs to the cytochrome P450 family. Heme is required as a cofactor. As to expression, mostly expressed in roots, and, to a lower extent, in stems and leaves. Accumulates only in the rhizome of plants.

The protein resides in the membrane. It carries out the reaction beta-amyrin + 3 reduced [NADPH--hemoprotein reductase] + 3 O2 = oleanolate + 3 oxidized [NADPH--hemoprotein reductase] + 4 H2O + 4 H(+). The protein operates within secondary metabolite biosynthesis; terpenoid biosynthesis. Its function is as follows. Component of the oleanane-type triterpene saponins (e.g. ginsenosides or panaxosides) biosynthetic pathway. Catalyzes the carboxylation of beta-amyrin at the C-28 position to form oleanolic acid during ginsenoside biosynthesis, a class of tetracyclic triterpenoid saponins. The protein is Beta-amyrin 28-monooxygenase of Panax ginseng (Korean ginseng).